The chain runs to 429 residues: Glutamate-1-semialdehyde 2,1-aminomutase 1 (429 aa).

An N6-(pyridoxal phosphate)lysine modification is found at lysine 267.

It belongs to the class-III pyridoxal-phosphate-dependent aminotransferase family. HemL subfamily. In terms of assembly, homodimer. It depends on pyridoxal 5'-phosphate as a cofactor.

It localises to the cytoplasm. It carries out the reaction (S)-4-amino-5-oxopentanoate = 5-aminolevulinate. Its pathway is porphyrin-containing compound metabolism; protoporphyrin-IX biosynthesis; 5-aminolevulinate from L-glutamyl-tRNA(Glu): step 2/2. The sequence is that of Glutamate-1-semialdehyde 2,1-aminomutase 1 from Staphylococcus carnosus (strain TM300).